A 421-amino-acid polypeptide reads, in one-letter code: Gamma-glutamyl phosphate reductase (421 aa).

Belongs to the gamma-glutamyl phosphate reductase family.

It is found in the cytoplasm. The enzyme catalyses L-glutamate 5-semialdehyde + phosphate + NADP(+) = L-glutamyl 5-phosphate + NADPH + H(+). It functions in the pathway amino-acid biosynthesis; L-proline biosynthesis; L-glutamate 5-semialdehyde from L-glutamate: step 2/2. In terms of biological role, catalyzes the NADPH-dependent reduction of L-glutamate 5-phosphate into L-glutamate 5-semialdehyde and phosphate. The product spontaneously undergoes cyclization to form 1-pyrroline-5-carboxylate. This Brucella melitensis biotype 1 (strain ATCC 23456 / CCUG 17765 / NCTC 10094 / 16M) protein is Gamma-glutamyl phosphate reductase.